Reading from the N-terminus, the 606-residue chain is Ectonucleoside triphosphate diphosphohydrolase 7 (606 aa).

Residues 1–28 (MARISFSYLCPASWYFTVPTVSPFLRQR) lie on the Cytoplasmic side of the membrane. Residues 29–49 (VAFLGLFFIPCVLLLLLIMDL) traverse the membrane as a helical segment. Over 50–548 (RHWATSLPRD…PAHGSWLRLS (499 aa)) the chain is Vesicular. Residue glutamate 217 is the Proton acceptor of the active site. N-linked (GlcNAc...) asparagine glycosylation occurs at asparagine 330. Cysteine 448 and cysteine 477 are oxidised to a cystine. Residues 549–569 (FVYNHYLFFACTLVVLLAIVL) traverse the membrane as a helical segment. Residues 570–606 (YLLRIHRIHRRQTRASAPLDLLWIEQVVPMIGVQVGP) lie on the Cytoplasmic side of the membrane.

It belongs to the GDA1/CD39 NTPase family. The cofactor is Ca(2+). Requires Mg(2+) as cofactor. In terms of tissue distribution, widely expressed. Expressed at high level in brain, kidney, liver, testis and small intestin. Weakly expressed in lung, thymus and heart.

It is found in the cytoplasmic vesicle membrane. It catalyses the reaction a ribonucleoside 5'-triphosphate + H2O = a ribonucleoside 5'-diphosphate + phosphate + H(+). It carries out the reaction UTP + H2O = UDP + phosphate + H(+). The enzyme catalyses GTP + H2O = GDP + phosphate + H(+). The catalysed reaction is CTP + H2O = CDP + phosphate + H(+). It catalyses the reaction ATP + H2O = ADP + phosphate + H(+). Catalyzes the hydrolysis of nucleoside triphosphates and diphosphates in a calcium- or magnesium-dependent manner. Preferentially hydrolyzes nucleoside 5'-triphosphates, with substrate preference for UTP &gt; GTP &gt; CTP. Hydrolyzes nucleoside diphosphates only to a minor extent. In contrast to its human ortholog is able to hydrolyze ATP. In the epithelial cells of small intestine controls luminal ATP levels, therefore regulating Th17-cell development. In Mus musculus (Mouse), this protein is Ectonucleoside triphosphate diphosphohydrolase 7 (Entpd7).